Here is a 673-residue protein sequence, read N- to C-terminus: Pesticin receptor (673 aa).

An N-terminal signal peptide occupies residues 1-22 (MKMTRLYPLALGGLLLPAIANA). The short motif at 30-37 (STLEVTAS) is the TonB box element. Positions 41-155 (SRSASANNVS…QGGIINIVTQ (115 aa)) constitute a TBDR plug domain. The TBDR beta-barrel domain occupies 160-672 (TPRGYIEGGV…TVGINTRIDF (513 aa)). The short motif at 657–673 (QVNMGRTVGINTRIDFF) is the TonB C-terminal box element.

Belongs to the TonB-dependent receptor family.

Its subcellular location is the cell outer membrane. Receptor for the bacteriocin pesticin and for the siderophore yersiniabactin. The protein is Pesticin receptor (fyuA) of Yersinia enterocolitica serotype O:8 / biotype 1B (strain NCTC 13174 / 8081).